The primary structure comprises 248 residues: 7-cyano-7-deazaguanine synthase (248 aa).

Residue 22–32 coordinates ATP; it reads LSGGLDSTTCL. Residues cysteine 216, cysteine 225, cysteine 228, and cysteine 231 each contribute to the Zn(2+) site.

The protein belongs to the QueC family. Requires Zn(2+) as cofactor.

The enzyme catalyses 7-carboxy-7-deazaguanine + NH4(+) + ATP = 7-cyano-7-deazaguanine + ADP + phosphate + H2O + H(+). Its pathway is purine metabolism; 7-cyano-7-deazaguanine biosynthesis. Functionally, catalyzes the ATP-dependent conversion of 7-carboxy-7-deazaguanine (CDG) to 7-cyano-7-deazaguanine (preQ(0)). This chain is 7-cyano-7-deazaguanine synthase, found in Leptospira biflexa serovar Patoc (strain Patoc 1 / Ames).